A 494-amino-acid polypeptide reads, in one-letter code: Probable cytosol aminopeptidase (494 aa).

2 residues coordinate Mn(2+): lysine 260 and aspartate 265. Lysine 272 is an active-site residue. Mn(2+) is bound by residues aspartate 283, aspartate 342, and glutamate 344. Arginine 346 is a catalytic residue.

Belongs to the peptidase M17 family. Mn(2+) serves as cofactor.

Its subcellular location is the cytoplasm. The enzyme catalyses Release of an N-terminal amino acid, Xaa-|-Yaa-, in which Xaa is preferably Leu, but may be other amino acids including Pro although not Arg or Lys, and Yaa may be Pro. Amino acid amides and methyl esters are also readily hydrolyzed, but rates on arylamides are exceedingly low.. The catalysed reaction is Release of an N-terminal amino acid, preferentially leucine, but not glutamic or aspartic acids.. In terms of biological role, presumably involved in the processing and regular turnover of intracellular proteins. Catalyzes the removal of unsubstituted N-terminal amino acids from various peptides. The protein is Probable cytosol aminopeptidase of Bacillus anthracis (strain CDC 684 / NRRL 3495).